Here is a 221-residue protein sequence, read N- to C-terminus: Small ribosomal subunit protein uS2 (221 aa).

Positions 202–221 (KVKMPQQNQRGRPQRRFQRR) are disordered.

Belongs to the universal ribosomal protein uS2 family.

This Methanococcus vannielii (strain ATCC 35089 / DSM 1224 / JCM 13029 / OCM 148 / SB) protein is Small ribosomal subunit protein uS2.